The chain runs to 246 residues: Neuromodulin (246 aa).

The tract at residues 1–246 (MLCCMRRTKQ…EESKADQENA (246 aa)) is disordered. 2 S-palmitoyl cysteine lipidation sites follow: Cys-3 and Cys-4. The segment covering 9–33 (KQVEKNEDGDQKIEQDGIKPEDKAH) has biased composition (basic and acidic residues). Residues 32–61 (AHKAATKIQASFRGHITRKKLKGEKKADAP) form the IQ domain. 2 stretches are compositionally biased toward low complexity: residues 87–99 (ASAA…ADSA) and 125–157 (SEQP…KAST). Basic and acidic residues predominate over residues 164-176 (KADEAQDKEEPKQ). A compositionally biased stretch (low complexity) spans 177–203 (ADVPAADTTATTTPAAEDATAKATAQP). Composition is skewed to basic and acidic residues over residues 213–225 (TEEK…ETKP) and 237–246 (EESKADQENA).

This sequence belongs to the neuromodulin family. Binds calmodulin with a greater affinity in the absence of Ca(2+) than in its presence. Palmitoylated. Palmitoylation is essential for plasma membrane association. As to expression, expressed in neurons.

The protein localises to the cell membrane. The protein resides in the cell projection. Its subcellular location is the growth cone membrane. It localises to the synapse. It is found in the filopodium membrane. Its function is as follows. This protein is associated with nerve growth. It is a major component of the motile 'growth cones' that form the tips of elongating axons. Plays a role in axonal and dendritic filopodia induction. The chain is Neuromodulin (GAP43) from Gallus gallus (Chicken).